Consider the following 59-residue polypeptide: Large ribosomal subunit protein bL32 (59 aa).

Basic residues predominate over residues 1-16; the sequence is MAVPKRKTSPSKRGMR. The segment at 1–41 is disordered; sequence MAVPKRKTSPSKRGMRRSADALKAPTYIEDKNSGELRRPHH. Residues 28 to 41 are compositionally biased toward basic and acidic residues; sequence IEDKNSGELRRPHH.

Belongs to the bacterial ribosomal protein bL32 family.

This is Large ribosomal subunit protein bL32 from Bartonella henselae (strain ATCC 49882 / DSM 28221 / CCUG 30454 / Houston 1) (Rochalimaea henselae).